We begin with the raw amino-acid sequence, 218 residues long: Glutathione S-transferase-like protein OpS6 (218 aa).

The GST N-terminal domain maps to 5–86; the sequence is QPIKLYAHKK…YLIEQYDKDG (82 aa). Residues 92–218 enclose the GST C-terminal domain; that stretch reads SLQDKSLARA…KIAATKAALA (127 aa).

The protein belongs to the GST superfamily.

It functions in the pathway secondary metabolite biosynthesis. In terms of biological role, glutathione S-transferase-like protein; part of the gene cluster that mediates the biosynthesis of the bibenzoquinone oosporein, a metabolite required for fungal virulence that acts by evading host immunity to facilitate fungal multiplication in insects. The non-reducing polyketide synthase OpS1 produces orsellinic acid by condensing acetyl-CoA with 3 malonyl-CoA units. Orsellinic acid is then hydroxylated to benzenetriol by the hydroxylase OpS4. The intermediate is oxidized either nonenzymatically to 5,5'-dideoxy-oosporein or enzymatically to benzenetetrol by the oxidoreductase OpS7. The latter is further dimerized to oosporein by the catalase OpS5. OpS6 probably functions en route for protecting cells against oxidative stress by scavenging any leaked free radical form of benzenetetrol by activating the thiol group of glutathione. The polypeptide is Glutathione S-transferase-like protein OpS6 (Beauveria bassiana (strain ARSEF 2860) (White muscardine disease fungus)).